An 876-amino-acid chain; its full sequence is Alanine--tRNA ligase (876 aa).

Lys74 carries the post-translational modification N6-acetyllysine. Zn(2+)-binding residues include His564, His568, Cys666, and His670.

The protein belongs to the class-II aminoacyl-tRNA synthetase family. In terms of assembly, homotetramer. The cofactor is Zn(2+).

It localises to the cytoplasm. The enzyme catalyses tRNA(Ala) + L-alanine + ATP = L-alanyl-tRNA(Ala) + AMP + diphosphate. Catalyzes the attachment of alanine to tRNA(Ala) in a two-step reaction: alanine is first activated by ATP to form Ala-AMP and then transferred to the acceptor end of tRNA(Ala). Also edits incorrectly charged Ser-tRNA(Ala) and Gly-tRNA(Ala) via its editing domain. This Escherichia coli O6:K15:H31 (strain 536 / UPEC) protein is Alanine--tRNA ligase.